Here is a 235-residue protein sequence, read N- to C-terminus: Ubiquinone biosynthesis O-methyltransferase (235 aa).

The S-adenosyl-L-methionine site is built by Arg-39, Gly-59, Asp-80, and Met-124.

Belongs to the methyltransferase superfamily. UbiG/COQ3 family.

It carries out the reaction a 3-demethylubiquinol + S-adenosyl-L-methionine = a ubiquinol + S-adenosyl-L-homocysteine + H(+). The enzyme catalyses a 3-(all-trans-polyprenyl)benzene-1,2-diol + S-adenosyl-L-methionine = a 2-methoxy-6-(all-trans-polyprenyl)phenol + S-adenosyl-L-homocysteine + H(+). It participates in cofactor biosynthesis; ubiquinone biosynthesis. In terms of biological role, O-methyltransferase that catalyzes the 2 O-methylation steps in the ubiquinone biosynthetic pathway. The chain is Ubiquinone biosynthesis O-methyltransferase from Vibrio parahaemolyticus serotype O3:K6 (strain RIMD 2210633).